We begin with the raw amino-acid sequence, 461 residues long: Vimentin (461 aa).

2 stretches are compositionally biased toward low complexity: residues 1-14 and 35-52; these read MNRTTSRQTTSSSS and SSRQYSSPVRSSRMSYSV. Residues 1–52 are disordered; it reads MNRTTSRQTTSSSSYKRMFGGEGRPSVGMARSTLSSRQYSSPVRSSRMSYSV. The segment at 1–91 is head; it reads MNRTTSRQTT…FALSDAINSE (91 aa). Residues 92–127 are coil 1A; sequence FKANRTNEKAEMQHLNDRFASYIDKVRFLEQQNKIL. The stretch at 92–127 forms a coiled coil; that stretch reads FKANRTNEKAEMQHLNDRFASYIDKVRFLEQQNKIL. Residues 99–407 enclose the IF rod domain; the sequence is EKAEMQHLND…KLLEGEESRI (309 aa). Residues 128 to 149 form a linker 1 region; that stretch reads LAELEQLKGKGASRIGDLYEDE. The stretch at 150 to 241 forms a coiled coil; it reads MRDLRRQVDQ…KLHDEEVAEL (92 aa). Residues 150–241 are coil 1B; it reads MRDLRRQVDQ…KLHDEEVAEL (92 aa). Residues 242–264 form a linker 12 region; the sequence is QAQIQDQHVQIDMDVAKPDLTAA. The coil 2 stretch occupies residues 265–403; that stretch reads LRDVRVQYET…ATYRKLLEGE (139 aa). The stretch at 299–403 forms a coiled coil; sequence NRNTDAIRQA…ATYRKLLEGE (105 aa). The interval 404–461 is tail; sequence ESRITTPMPNFSSFNLRESMLEARPMIDNLSKKVVIKTIETRDGHVINESTQNHDDLE.

This sequence belongs to the intermediate filament family. Homomer assembled from elementary dimers. In terms of processing, one of the most prominent phosphoproteins in various cells of mesenchymal origin. Phosphorylation is enhanced during cell division, at which time vimentin filaments are significantly reorganized.

The protein resides in the cytoplasm. It localises to the cytoskeleton. It is found in the nucleus matrix. Vimentins are class-III intermediate filaments found in various non-epithelial cells, especially mesenchymal cells. Vimentin is attached to the nucleus, endoplasmic reticulum, and mitochondria, either laterally or terminally. The polypeptide is Vimentin (vim) (Oncorhynchus mykiss (Rainbow trout)).